A 320-amino-acid polypeptide reads, in one-letter code: Mas-related G-protein coupled receptor member D (320 aa).

At 1-33 (MNQTLNSSGTAELALNHSRGSVVHAACLVLSSL) the chain is on the extracellular side. 3 N-linked (GlcNAc...) asparagine glycosylation sites follow: asparagine 2, asparagine 6, and asparagine 16. A helical membrane pass occupies residues 34–54 (AMFTCLCGMAGNSMVIWLLGF). Topologically, residues 55–62 (RMRRTPFS) are cytoplasmic. Residues 63–83 (IYILNLAAADLLFVFCMAAML) form a helical membrane-spanning segment. The Extracellular portion of the chain corresponds to 84–112 (SLETQPLVSTTDKVHELMKRLKYFAYTVG). The helical transmembrane segment at 113–133 (LSLLTAISTQRCLSVLFPIWF) threads the bilayer. Residues 134-142 (KCHRPRHLS) are Cytoplasmic-facing. The helical transmembrane segment at 143–163 (AWVCALLWMLCLLTNGLTSCF) threads the bilayer. At 164-182 (CSKFLKFNKDQCFRVDMVQ) the chain is on the extracellular side. The chain crosses the membrane as a helical span at residues 183–203 (AALIMGVLTPVMTLSSLTLFV). The Cytoplasmic portion of the chain corresponds to 204–218 (RVRRSSQQWRRQPTR). A helical membrane pass occupies residues 219–239 (LFVVVLASVLVFLICSLPLGF). Topologically, residues 240 to 257 (YWFVLYWLNLPPDTKVLY) are extracellular. A helical transmembrane segment spans residues 258-280 (FNLSRLSSSMSSSANPLIYFLVG). The Cytoplasmic segment spans residues 281 to 320 (SRRSRRLQGSLGTVLQRALREEPELEGGETPTTGTNEMGA). The tract at residues 301 to 320 (EEPELEGGETPTTGTNEMGA) is disordered. Positions 308-320 (GETPTTGTNEMGA) are enriched in low complexity.

The protein belongs to the G-protein coupled receptor 1 family. Mas subfamily. Co-expressed in the small diameter neurons with P2X3 and VR1 in dorsal root ganglia.

It is found in the cell membrane. In terms of biological role, may regulate nociceptor function and/or development, including the sensation or modulation of pain. Functions as a specific membrane receptor for beta-alanine. The receptor couples with G-protein G(q) and G(i). This chain is Mas-related G-protein coupled receptor member D (MRGPRD), found in Macaca fascicularis (Crab-eating macaque).